Consider the following 374-residue polypeptide: Mitochondrial import inner membrane translocase subunit tim50 (374 aa).

The transit peptide at 1-48 (MILNKVAKCYGKQIGFFGNKTTQFIKPNQTIFLIGGTKRLFTTQQQQS) directs the protein to the mitochondrion. A disordered region spans residues 42 to 97 (TTQQQQSPKKEEPKSEQQKKVEDKTEEKEKEKDEEENENEKEKENEDGEGQKKKSK). Composition is skewed to basic and acidic residues over residues 49-72 (PKKE…KEKE) and 81-93 (EKEK…EGQK). A helical membrane pass occupies residues 103–125 (IVTSVTSTFFAGVLVASTFGYLT). Residues 191–332 (PGGKKYTLVI…IELLPVLESF (142 aa)) form the FCP1 homology domain.

It belongs to the TIM50 family. As to quaternary structure, component of the mitochondrial import inner membrane translocase complex.

It localises to the mitochondrion inner membrane. Its function is as follows. Component of the mitochondrial import inner membrane translocase that mediates the translocation of transit peptide-containing proteins across the mitochondrial inner membrane. The sequence is that of Mitochondrial import inner membrane translocase subunit tim50 (timm50) from Dictyostelium discoideum (Social amoeba).